Here is a 709-residue protein sequence, read N- to C-terminus: Polyribonucleotide nucleotidyltransferase (709 aa).

Mg(2+) contacts are provided by aspartate 489 and aspartate 495. Residues 556–615 (PKIDMIKIDVDKIKVVIGKGGETIDKIIAETGVKIDIDEEGNVSIFSSDQAAIDRTKDII) form the KH domain. In terms of domain architecture, S1 motif spans 625–693 (GEVYHAKVVR…DKGRVDASMK (69 aa)).

This sequence belongs to the polyribonucleotide nucleotidyltransferase family. It depends on Mg(2+) as a cofactor.

It localises to the cytoplasm. It catalyses the reaction RNA(n+1) + phosphate = RNA(n) + a ribonucleoside 5'-diphosphate. Functionally, involved in mRNA degradation. Catalyzes the phosphorolysis of single-stranded polyribonucleotides processively in the 3'- to 5'-direction. This Streptococcus agalactiae serotype Ia (strain ATCC 27591 / A909 / CDC SS700) protein is Polyribonucleotide nucleotidyltransferase.